The sequence spans 585 residues: Formate--tetrahydrofolate ligase (585 aa).

74–81 is a binding site for ATP; it reads TPLGEGKT.

This sequence belongs to the formate--tetrahydrofolate ligase family.

The catalysed reaction is (6S)-5,6,7,8-tetrahydrofolate + formate + ATP = (6R)-10-formyltetrahydrofolate + ADP + phosphate. The protein operates within one-carbon metabolism; tetrahydrofolate interconversion. The sequence is that of Formate--tetrahydrofolate ligase from Yersinia enterocolitica serotype O:8 / biotype 1B (strain NCTC 13174 / 8081).